The chain runs to 47 residues: Cytochrome b559 subunit beta (47 aa).

A helical membrane pass occupies residues 22-38 (WLAVHTLAIPTVFFLGA). Histidine 26 serves as a coordination point for heme.

It belongs to the PsbE/PsbF family. As to quaternary structure, heterodimer of an alpha subunit and a beta subunit. PSII is composed of 1 copy each of membrane proteins PsbA, PsbB, PsbC, PsbD, PsbE, PsbF, PsbH, PsbI, PsbJ, PsbK, PsbL, PsbM, PsbT, PsbX, PsbY, PsbZ, Psb30/Ycf12, peripheral proteins PsbO, CyanoQ (PsbQ), PsbU, PsbV and a large number of cofactors. It forms dimeric complexes. Heme b serves as cofactor.

The protein localises to the cellular thylakoid membrane. In terms of biological role, this b-type cytochrome is tightly associated with the reaction center of photosystem II (PSII). PSII is a light-driven water:plastoquinone oxidoreductase that uses light energy to abstract electrons from H(2)O, generating O(2) and a proton gradient subsequently used for ATP formation. It consists of a core antenna complex that captures photons, and an electron transfer chain that converts photonic excitation into a charge separation. The protein is Cytochrome b559 subunit beta of Synechococcus sp. (strain JA-3-3Ab) (Cyanobacteria bacterium Yellowstone A-Prime).